Here is a 528-residue protein sequence, read N- to C-terminus: GMP synthase [glutamine-hydrolyzing] (528 aa).

The 192-residue stretch at 13–204 folds into the Glutamine amidotransferase type-1 domain; that stretch reads AIVILDFGSQ…VYHICGCEPD (192 aa). Cys90 (nucleophile) is an active-site residue. Catalysis depends on residues His178 and Glu180. The region spanning 205 to 403 is the GMPS ATP-PPase domain; it reads WTTTAFIEEA…LGLPEEIVRR (199 aa). 232–238 is a binding site for ATP; it reads SGGVDSS.

Homodimer.

The catalysed reaction is XMP + L-glutamine + ATP + H2O = GMP + L-glutamate + AMP + diphosphate + 2 H(+). The protein operates within purine metabolism; GMP biosynthesis; GMP from XMP (L-Gln route): step 1/1. Catalyzes the synthesis of GMP from XMP. The protein is GMP synthase [glutamine-hydrolyzing] of Prochlorococcus marinus (strain MIT 9303).